Reading from the N-terminus, the 217-residue chain is MIQSAKELLKKGAAELGVQLDAAQLESLNLFAEELKKWNRKINLTAITGDEEIALKHLVDSLSLLKAVRGPGRLLDIGSGGGFPCIPVKIVQPDLEMVSVDAVVKKISFQKQAVRLLNLTGFTALHVRAETLAQEYAASFDWVVSRAFSDIPSFVAMALPVLKPEGRIVAMKGRSAAEEVEGAKDKLDALGAGVLEVMDFTLPGTGDARSLVVIGRN.

S-adenosyl-L-methionine-binding positions include G78, F83, 129–130, and R146; that span reads AE.

The protein belongs to the methyltransferase superfamily. RNA methyltransferase RsmG family.

It localises to the cytoplasm. The enzyme catalyses guanosine(527) in 16S rRNA + S-adenosyl-L-methionine = N(7)-methylguanosine(527) in 16S rRNA + S-adenosyl-L-homocysteine. In terms of biological role, specifically methylates the N7 position of guanine in position 527 of 16S rRNA. The polypeptide is Ribosomal RNA small subunit methyltransferase G (Geobacter sp. (strain M21)).